Reading from the N-terminus, the 100-residue chain is Small ribosomal subunit protein uS14c (100 aa).

The protein belongs to the universal ribosomal protein uS14 family. In terms of assembly, part of the 30S ribosomal subunit.

It localises to the plastid. It is found in the chloroplast. Binds 16S rRNA, required for the assembly of 30S particles. This Emiliania huxleyi (Coccolithophore) protein is Small ribosomal subunit protein uS14c.